The following is a 686-amino-acid chain: Myb-related protein B (686 aa).

Positions 1-28 (MARRSRGEDQDELHCQDTDSDVPEQRDG) are disordered. 3 HTH myb-type domains span residues 26–77 (RDGR…LRVL), 78–133 (NPDL…NPEV), and 134–184 (KKSS…KRKV). 3 consecutive DNA-binding regions (H-T-H motif) follow at residues 54–77 (WKFL…LRVL), 106–129 (WTLI…HNHL), and 157–180 (WAEI…NSTI). Disordered regions lie at residues 315–355 (CDLT…VTEY) and 493–512 (YVVD…LEKY). A compositionally biased stretch (low complexity) spans 326–343 (PSAGSSSSSNSPVRQTPS).

In terms of assembly, component of the DREAM complex. Expressed in hematopoietic and non hematopoietic cells.

Its subcellular location is the nucleus. In terms of biological role, represses v-myb- and c-myb-mediated activation of the mim-1 gene, probably by competing with other myb proteins for binding sites. It is an inhibitory member of the myb family. This chain is Myb-related protein B (MYBL2), found in Gallus gallus (Chicken).